Consider the following 627-residue polypeptide: CTP synthase (627 aa).

In terms of domain architecture, Glutamine amidotransferase type-1 spans 300–554; sequence CIAVVGKYTK…LASVDRLNQY (255 aa). Active-site for GATase activity residues include Cys399, His526, and Glu528. Phosphoserine occurs at positions 567, 570, 571, and 588. Thr595 carries the post-translational modification Phosphothreonine. A compositionally biased stretch (polar residues) spans 599–613; that stretch reads GISKSCNGSISTSDS. The segment at 599–627 is disordered; that stretch reads GISKSCNGSISTSDSEGACGGVDPTNGHK.

This sequence belongs to the CTP synthase family. In terms of tissue distribution, in ovary, expressed in oocytes, follicle cells and nurse cells. Also expressed in larval and adult testis (at protein level). In larvae, expressed in lymph gland, salivary gland, regions of the midgut, testis, optical lobe and trachea. Isoform 1 is expressed in adult testis, ovary, accessory gland and head. Isoform 2 is weakly expressed in ovary.

Its subcellular location is the cytoplasm. It catalyses the reaction UTP + L-glutamine + ATP + H2O = CTP + L-glutamate + ADP + phosphate + 2 H(+). It participates in pyrimidine metabolism; CTP biosynthesis via de novo pathway; CTP from UDP: step 2/2. Catalyzes the ATP-dependent amination of UTP to CTP with either L-glutamine or ammonia as the source of nitrogen. Constitutes the rate-limiting enzyme in the synthesis of cytosine nucleotides. Its function is as follows. Required for assembly of cytoophidium in female germline cells. In nurse cells, CTPsyn filament assembly in the cytoophidium is regulated by Ack kinase which may thereby contribute to the control of CTP production at specific stages of oogenesis and development of the nurse cell membrane. This chain is CTP synthase, found in Drosophila melanogaster (Fruit fly).